A 739-amino-acid chain; its full sequence is Protein kinase C (739 aa).

A C2 domain is found at 1–117; it reads MFTGKLQIKV…SETAVQDLWV (117 aa). Phorbol-ester/DAG-type zinc fingers lie at residues 176–226 and 251–301; these read GHKF…VSKC and PHRF…ANTC. One can recognise a Protein kinase domain in the interval 408–665; the sequence is FNFIKVLGKG…ENEIRKHPFF (258 aa). ATP contacts are provided by residues 414-422 and K437; that span reads LGKGSFGKV. Catalysis depends on D532, which acts as the Proton acceptor. Positions 666-737 constitute an AGC-kinase C-terminal domain; sequence AKLDWKELEK…VNPKFGPERK (72 aa).

Belongs to the protein kinase superfamily. AGC Ser/Thr protein kinase family. PKC subfamily.

The enzyme catalyses L-seryl-[protein] + ATP = O-phospho-L-seryl-[protein] + ADP + H(+). It catalyses the reaction L-threonyl-[protein] + ATP = O-phospho-L-threonyl-[protein] + ADP + H(+). Functionally, PKC is activated by diacylglycerol which in turn phosphorylates a range of cellular proteins. PKC also serves as the receptor for phorbol esters, a class of tumor promoters. This chain is Protein kinase C (Pkc98E), found in Drosophila melanogaster (Fruit fly).